The primary structure comprises 463 residues: Secretogranin-3 (463 aa).

The first 20 residues, 1–20 (MGPKYVFITAIIGVFWHVQG), serve as a signal peptide directing secretion. Disordered stretches follow at residues 87–111 (VKRSGSVRSSVGGHRGTLDDADSTK), 225–267 (DDDK…PEED), and 353–398 (EDKN…KGKA). Basic and acidic residues-rich tracts occupy residues 102-111 (GTLDDADSTK) and 229-262 (QEGKMETRNKNEDRESSETKNEDSFSSKERRNEL).

Interacts with CHGA. Interacts with secretogranin II/SCG2. Interacts (via C-terminus) with CPE.

It is found in the cytoplasmic vesicle. Its subcellular location is the secretory vesicle. The protein resides in the secretory vesicle membrane. It localises to the secreted. Member of the granin protein family that regulates the biogenesis of secretory granules. Acts as a sorting receptor for intragranular proteins including chromogranin A/CHGA. May also play a role in angiogenesis. Promotes endothelial proliferation, migration and tube formation through MEK/ERK signaling pathway. The sequence is that of Secretogranin-3 (scg3) from Xenopus tropicalis (Western clawed frog).